The primary structure comprises 238 residues: Ribitol-5-phosphate cytidylyltransferase (238 aa).

CTP-binding positions include 7–10 and 81–87; these read LAGG and GSDRNET.

Belongs to the IspD/TarI cytidylyltransferase family. TarI subfamily.

It catalyses the reaction D-ribitol 5-phosphate + CTP + H(+) = CDP-L-ribitol + diphosphate. The protein operates within cell wall biogenesis; poly(ribitol phosphate) teichoic acid biosynthesis. In terms of biological role, catalyzes the transfer of the cytidylyl group of CTP to D-ribitol 5-phosphate. This Staphylococcus saprophyticus subsp. saprophyticus (strain ATCC 15305 / DSM 20229 / NCIMB 8711 / NCTC 7292 / S-41) protein is Ribitol-5-phosphate cytidylyltransferase.